Reading from the N-terminus, the 330-residue chain is N-acetyl-gamma-glutamyl-phosphate reductase (330 aa).

Residue Cys-143 is part of the active site.

It belongs to the NAGSA dehydrogenase family. Type 1 subfamily.

Its subcellular location is the cytoplasm. The enzyme catalyses N-acetyl-L-glutamate 5-semialdehyde + phosphate + NADP(+) = N-acetyl-L-glutamyl 5-phosphate + NADPH + H(+). It participates in amino-acid biosynthesis; L-arginine biosynthesis; N(2)-acetyl-L-ornithine from L-glutamate: step 3/4. Catalyzes the NADPH-dependent reduction of N-acetyl-5-glutamyl phosphate to yield N-acetyl-L-glutamate 5-semialdehyde. The chain is N-acetyl-gamma-glutamyl-phosphate reductase from Methanocorpusculum labreanum (strain ATCC 43576 / DSM 4855 / Z).